The chain runs to 360 residues: GDSL esterase/lipase At2g31540 (360 aa).

The signal sequence occupies residues 1-23; sequence MSTSKAITLTLFIATTLLAPCNA. S42 (nucleophile) is an active-site residue. 2 N-linked (GlcNAc...) asparagine glycosylation sites follow: N104 and N326. Catalysis depends on residues D334 and H337.

This sequence belongs to the 'GDSL' lipolytic enzyme family.

The protein localises to the secreted. This chain is GDSL esterase/lipase At2g31540, found in Arabidopsis thaliana (Mouse-ear cress).